Here is a 664-residue protein sequence, read N- to C-terminus: Transketolase 1 (664 aa).

H26 serves as a coordination point for substrate. Thiamine diphosphate-binding positions include H66 and 114-116 (GPL). D155 provides a ligand contact to Mg(2+). Thiamine diphosphate is bound by residues G156 and N185. Residues N185 and I187 each coordinate Mg(2+). Substrate is bound by residues H260, R357, and S384. Residue H260 participates in thiamine diphosphate binding. E411 functions as the Proton donor in the catalytic mechanism. F437 contacts thiamine diphosphate. 3 residues coordinate substrate: H461, D469, and R520.

Belongs to the transketolase family. Homodimer. Mg(2+) is required as a cofactor. It depends on Ca(2+) as a cofactor. Requires Mn(2+) as cofactor. The cofactor is Co(2+). Thiamine diphosphate serves as cofactor.

The enzyme catalyses D-sedoheptulose 7-phosphate + D-glyceraldehyde 3-phosphate = aldehydo-D-ribose 5-phosphate + D-xylulose 5-phosphate. In terms of biological role, catalyzes the transfer of a two-carbon ketol group from a ketose donor to an aldose acceptor, via a covalent intermediate with the cofactor thiamine pyrophosphate. The chain is Transketolase 1 (tkt1) from Vibrio vulnificus (strain YJ016).